Consider the following 378-residue polypeptide: Cobalt-precorrin-5B C(1)-methyltransferase (378 aa).

The protein belongs to the CbiD family.

The catalysed reaction is Co-precorrin-5B + S-adenosyl-L-methionine = Co-precorrin-6A + S-adenosyl-L-homocysteine. It participates in cofactor biosynthesis; adenosylcobalamin biosynthesis; cob(II)yrinate a,c-diamide from sirohydrochlorin (anaerobic route): step 6/10. In terms of biological role, catalyzes the methylation of C-1 in cobalt-precorrin-5B to form cobalt-precorrin-6A. The polypeptide is Cobalt-precorrin-5B C(1)-methyltransferase (Photorhabdus laumondii subsp. laumondii (strain DSM 15139 / CIP 105565 / TT01) (Photorhabdus luminescens subsp. laumondii)).